The primary structure comprises 315 residues: Homoserine kinase (315 aa).

Residue 91-101 coordinates ATP; sequence PIGSGLGSSAS.

It belongs to the GHMP kinase family. Homoserine kinase subfamily.

The protein resides in the cytoplasm. It catalyses the reaction L-homoserine + ATP = O-phospho-L-homoserine + ADP + H(+). It participates in amino-acid biosynthesis; L-threonine biosynthesis; L-threonine from L-aspartate: step 4/5. Its function is as follows. Catalyzes the ATP-dependent phosphorylation of L-homoserine to L-homoserine phosphate. The sequence is that of Homoserine kinase from Buchnera aphidicola subsp. Cinara cedri (strain Cc).